A 442-amino-acid polypeptide reads, in one-letter code: Meiosis-specific with OB domain-containing protein (442 aa).

A DNA-binding region (OB) is located at residues isoleucine 167 to arginine 272.

The protein belongs to the MEIOB family. As to quaternary structure, component of a multiprotein complex with RPA2 and SPATA22. Interacts with SPATA22. Interacts with the complex BRME1:HSF2BP:BRCA2. As to expression, in fetal gonads, specifically expressed in the ovary starting at the 14th weeks post fertilization. In the adult, restricted to testis.

It localises to the cytoplasm. Its subcellular location is the nucleus. It is found in the chromosome. In terms of biological role, single-stranded DNA-binding protein required for homologous recombination in meiosis I. Required for double strand breaks (DSBs) repair and crossover formation and promotion of faithful and complete synapsis. Not required for the initial loading of recombinases but required to maintain a proper number of RAD51 and DMC1 foci after the zygotene stage. May act by ensuring the stabilization of recombinases, which is required for successful homology search and meiotic recombination. Displays Single-stranded DNA 3'-5' exonuclease activity in vitro. The chain is Meiosis-specific with OB domain-containing protein from Homo sapiens (Human).